The chain runs to 1043 residues: Ack-related non-receptor tyrosine kinase (1043 aa).

The Protein kinase domain maps to 113-379; sequence ITLCKELGQG…SDIVAKFPER (267 aa). ATP contacts are provided by residues 119-127 and lysine 146; that span reads LGQGEFGSV. Aspartate 241 functions as the Proton acceptor in the catalytic mechanism. Positions 379–444 constitute an SH3 domain; the sequence is RRAQSVRAVV…RPTDTVAHLG (66 aa). Residues 443-481 form a disordered region; sequence LGSEPPCSNGTIENGFSEKEKGGKKNKKAEKESERERKK. Positions 458-481 are enriched in basic and acidic residues; that stretch reads FSEKEKGGKKNKKAEKESERERKK. The CRIB domain maps to 484–498; it reads ISEPVGDVRHTCHVG. 4 disordered regions span residues 514–644, 790–842, 859–898, and 932–993; these read MCPT…SAAN, KINE…GWSS, KQAS…LSVR, and LIDG…RQFP. Over residues 516-543 the composition is skewed to low complexity; sequence PTSSSPSTSRGSQASPAPSHTSSSTTSS. The segment covering 610–624 has biased composition (polar residues); sequence GNQHSVQVHDQFSSL. The span at 630–644 shows a compositional bias: low complexity; that stretch reads SLTPTAPPLTASAAN. The stretch at 785–812 forms a coiled coil; the sequence is EQEVRKINEKSAREHRKTEDLLREERQK. Basic and acidic residues predominate over residues 790-818; that stretch reads KINEKSAREHRKTEDLLREERQKEQKPGE. A compositionally biased stretch (polar residues) spans 825–842; that stretch reads PAESLYSTRTPQQEGWSS. A compositionally biased stretch (low complexity) spans 870–884; sequence PTSSRLSTLDRSSIS.

This sequence belongs to the protein kinase superfamily. Tyr protein kinase family. Requires Mg(2+) as cofactor.

The enzyme catalyses L-tyrosyl-[protein] + ATP = O-phospho-L-tyrosyl-[protein] + ADP + H(+). It catalyses the reaction L-seryl-[protein] + ATP = O-phospho-L-seryl-[protein] + ADP + H(+). It carries out the reaction L-threonyl-[protein] + ATP = O-phospho-L-threonyl-[protein] + ADP + H(+). Its function is as follows. Probable tyrosine protein kinase which plays a role in vulva development, probably by acting as a negative regulator of the let-23/EGFR and let-60/ras pathway. Involved in the negative regulation of germline development. The chain is Ack-related non-receptor tyrosine kinase from Caenorhabditis elegans.